We begin with the raw amino-acid sequence, 521 residues long: Adenosylhomocysteinase-like 1 (521 aa).

The interval 1–92 (MNNLADTVVV…EKVQKNSKGS (92 aa)) is disordered. A compositionally biased stretch (low complexity) spans 54 to 73 (RSLSASSTDSFSSASYTGSS). Positions 220 and 245 each coordinate substrate. 246-248 (SVT) is a binding site for NAD(+). Residues K275 and D279 each contribute to the substrate site. Residues 311-316 (GDVGKG), E332, 388-390 (MGH), N435, K515, 515-519 (KPNYY), and Y519 contribute to the NAD(+) site.

It belongs to the adenosylhomocysteinase family. In terms of assembly, interacts with Ahcy; the interaction may negatively regulate Ahcy catalytic activity. It depends on NAD(+) as a cofactor.

Might play a role in the regulation of methionine metabolism possibly by binding and inactivating Ahcy. This chain is Adenosylhomocysteinase-like 1, found in Drosophila melanogaster (Fruit fly).